Reading from the N-terminus, the 453-residue chain is Bifunctional protein GlmU (453 aa).

The pyrophosphorylase stretch occupies residues Met1–Lys225. UDP-N-acetyl-alpha-D-glucosamine contacts are provided by residues Leu6 to Gly9, Lys20, Gln71, Gly76 to Thr77, Tyr98 to Asp100, Gly135, Glu150, Asn165, and Asn223. Asp100 contacts Mg(2+). Asn223 contributes to the Mg(2+) binding site. The tract at residues Ala226 to Asp246 is linker. The N-acetyltransferase stretch occupies residues Gly247–Ser453. UDP-N-acetyl-alpha-D-glucosamine contacts are provided by Arg329 and Lys347. His359 functions as the Proton acceptor in the catalytic mechanism. Residues Tyr362 and Asn373 each contribute to the UDP-N-acetyl-alpha-D-glucosamine site. Residues Ala376, Asn382–Tyr383, Ser401, and Ala419 each bind acetyl-CoA.

In the N-terminal section; belongs to the N-acetylglucosamine-1-phosphate uridyltransferase family. The protein in the C-terminal section; belongs to the transferase hexapeptide repeat family. As to quaternary structure, homotrimer. Mg(2+) serves as cofactor.

Its subcellular location is the cytoplasm. The catalysed reaction is alpha-D-glucosamine 1-phosphate + acetyl-CoA = N-acetyl-alpha-D-glucosamine 1-phosphate + CoA + H(+). It catalyses the reaction N-acetyl-alpha-D-glucosamine 1-phosphate + UTP + H(+) = UDP-N-acetyl-alpha-D-glucosamine + diphosphate. Its pathway is nucleotide-sugar biosynthesis; UDP-N-acetyl-alpha-D-glucosamine biosynthesis; N-acetyl-alpha-D-glucosamine 1-phosphate from alpha-D-glucosamine 6-phosphate (route II): step 2/2. It functions in the pathway nucleotide-sugar biosynthesis; UDP-N-acetyl-alpha-D-glucosamine biosynthesis; UDP-N-acetyl-alpha-D-glucosamine from N-acetyl-alpha-D-glucosamine 1-phosphate: step 1/1. The protein operates within bacterial outer membrane biogenesis; LPS lipid A biosynthesis. Functionally, catalyzes the last two sequential reactions in the de novo biosynthetic pathway for UDP-N-acetylglucosamine (UDP-GlcNAc). The C-terminal domain catalyzes the transfer of acetyl group from acetyl coenzyme A to glucosamine-1-phosphate (GlcN-1-P) to produce N-acetylglucosamine-1-phosphate (GlcNAc-1-P), which is converted into UDP-GlcNAc by the transfer of uridine 5-monophosphate (from uridine 5-triphosphate), a reaction catalyzed by the N-terminal domain. The chain is Bifunctional protein GlmU from Burkholderia ambifaria (strain MC40-6).